Here is an 805-residue protein sequence, read N- to C-terminus: Cell division cycle protein 48 homolog (805 aa).

ATP contacts are provided by residues 249 to 256 and 522 to 529; these read GPPGSGKT and GPPGCGKT. Residues 783–805 form a disordered region; the sequence is GATAAADPFATSNAAADDDDLYS.

The protein belongs to the AAA ATPase family.

In terms of biological role, probably functions in cell division and growth processes. This Capsicum annuum (Capsicum pepper) protein is Cell division cycle protein 48 homolog (CAFP).